Here is a 566-residue protein sequence, read N- to C-terminus: Glucose starvation modulator protein 1 (566 aa).

Positions 20-48 (CVFCHQKHLQCSNERPCKNCVKRNIAHGC) form a DNA-binding region, zn(2)-C6 fungal-type. Disordered stretches follow at residues 63 to 92 (GVPG…SPMD) and 250 to 270 (KQAS…NTLS). Residues 253-270 (SPSPSNTSTSENNTNTLS) show a composition bias toward low complexity.

It belongs to the ERT1/acuK family.

The protein localises to the nucleus. Its function is as follows. Transcription factor which regulates nonfermentable carbon utilization. The polypeptide is Glucose starvation modulator protein 1 (GSM1) (Candida albicans (strain WO-1) (Yeast)).